Here is a 366-residue protein sequence, read N- to C-terminus: NADH-quinone oxidoreductase subunit D (366 aa).

The protein belongs to the complex I 49 kDa subunit family. NDH-1 is composed of 14 different subunits. Subunits NuoB, C, D, E, F, and G constitute the peripheral sector of the complex.

It is found in the cell membrane. It catalyses the reaction a quinone + NADH + 5 H(+)(in) = a quinol + NAD(+) + 4 H(+)(out). Functionally, NDH-1 shuttles electrons from NADH, via FMN and iron-sulfur (Fe-S) centers, to quinones in the respiratory chain. The immediate electron acceptor for the enzyme in this species is believed to be a menaquinone. Couples the redox reaction to proton translocation (for every two electrons transferred, four hydrogen ions are translocated across the cytoplasmic membrane), and thus conserves the redox energy in a proton gradient. This is NADH-quinone oxidoreductase subunit D from Bacillus cytotoxicus (strain DSM 22905 / CIP 110041 / 391-98 / NVH 391-98).